A 197-amino-acid polypeptide reads, in one-letter code: Methylamine utilization protein MauD (197 aa).

The helical transmembrane segment at 3–23 (FLIASNILLWIAFLGVTVVML) threads the bilayer. A Thioredoxin domain is found at 48 to 180 (PDIGDMAPEF…LESLLEADKT (133 aa)).

Its subcellular location is the membrane. It participates in one-carbon metabolism; methylamine degradation. May be specifically involved in the processing, transport, and/or maturation of the MADH beta-subunit. The protein is Methylamine utilization protein MauD (mauD) of Paracoccus versutus (Thiobacillus versutus).